Reading from the N-terminus, the 143-residue chain is Large ribosomal subunit protein uL11 (143 aa).

This sequence belongs to the universal ribosomal protein uL11 family. Part of the ribosomal stalk of the 50S ribosomal subunit. Interacts with L10 and the large rRNA to form the base of the stalk. L10 forms an elongated spine to which L12 dimers bind in a sequential fashion forming a multimeric L10(L12)X complex. One or more lysine residues are methylated.

Functionally, forms part of the ribosomal stalk which helps the ribosome interact with GTP-bound translation factors. The chain is Large ribosomal subunit protein uL11 from Bifidobacterium longum (strain DJO10A).